Here is a 288-residue protein sequence, read N- to C-terminus: Bis(5'-nucleosyl)-tetraphosphatase, symmetrical (288 aa).

Belongs to the Ap4A hydrolase family.

The catalysed reaction is P(1),P(4)-bis(5'-adenosyl) tetraphosphate + H2O = 2 ADP + 2 H(+). Hydrolyzes diadenosine 5',5'''-P1,P4-tetraphosphate to yield ADP. The chain is Bis(5'-nucleosyl)-tetraphosphatase, symmetrical from Pseudomonas putida (strain W619).